The sequence spans 37 residues: Cytochrome b6-f complex subunit 5 (37 aa).

Residues 5–25 (LLCGIVLGLIPITLMGLFVAA) form a helical membrane-spanning segment.

This sequence belongs to the PetG family. As to quaternary structure, the 4 large subunits of the cytochrome b6-f complex are cytochrome b6, subunit IV (17 kDa polypeptide, PetD), cytochrome f and the Rieske protein, while the 4 small subunits are PetG, PetL, PetM and PetN. The complex functions as a dimer.

The protein localises to the cellular thylakoid membrane. Functionally, component of the cytochrome b6-f complex, which mediates electron transfer between photosystem II (PSII) and photosystem I (PSI), cyclic electron flow around PSI, and state transitions. PetG is required for either the stability or assembly of the cytochrome b6-f complex. The protein is Cytochrome b6-f complex subunit 5 of Synechococcus sp. (strain CC9311).